The following is a 259-amino-acid chain: Imidazole glycerol phosphate synthase subunit HisF (259 aa).

Catalysis depends on residues Asp11 and Asp130.

Belongs to the HisA/HisF family. In terms of assembly, heterodimer of HisH and HisF.

It is found in the cytoplasm. It carries out the reaction 5-[(5-phospho-1-deoxy-D-ribulos-1-ylimino)methylamino]-1-(5-phospho-beta-D-ribosyl)imidazole-4-carboxamide + L-glutamine = D-erythro-1-(imidazol-4-yl)glycerol 3-phosphate + 5-amino-1-(5-phospho-beta-D-ribosyl)imidazole-4-carboxamide + L-glutamate + H(+). Its pathway is amino-acid biosynthesis; L-histidine biosynthesis; L-histidine from 5-phospho-alpha-D-ribose 1-diphosphate: step 5/9. IGPS catalyzes the conversion of PRFAR and glutamine to IGP, AICAR and glutamate. The HisF subunit catalyzes the cyclization activity that produces IGP and AICAR from PRFAR using the ammonia provided by the HisH subunit. The chain is Imidazole glycerol phosphate synthase subunit HisF from Lactococcus lactis subsp. cremoris (strain SK11).